An 880-amino-acid polypeptide reads, in one-letter code: MWSSAEIRKTFLEYFEERGHSVVESSSLVPVNDPTLLFTNAGMNQFKDVFLGLDKRKYVRATSSQKCVRAGGKHNDLDTVGRTPRHHTFFEMLGNFSFGDYFKREAIGYAWEFLTEVVGLPEEKLWVTIYQDDDEAADLWPEISGIDPGRIVRLGEKDNFWSMGDTGPCGPCSEILYDRGIEYSCGAPDCGIGVCDCDRWLEIWNLVFMQFNRDESGEMTPLPRPSIDTGMGLERLSSILQGVDSNFDTDLFIPIIKRIEELTGKAYEQGERGFPFRVIADHSRACSFLIADGVLPSNDGRGYVLRRILRRALRFGRFLGIEGSFLYKNVDVVCDIMQEAYPELLEKQDFIKEVIRLEEERFLLTLNDGLKKAEEIMERARQRGDNVIPGEEAFMLYDTYGFPLDLTEDMAEENQFTLDKAGFDRSMEEQRQRARQANKGEDLLGQERLLSEKLAGIAPSSFTGYENSRDESVLLAIIKGSELMDKALNGEEVILITARTPFYAESGGQVADCGIIKGQEGLLRVQDVKKLSAWILHYGIVEGVLTTGEGVSLQLDDPARMDTARNHTATHLLHRALREVLGEHAQQKGSLVEPARLRFDFSHLKALSSEELSRIEQMVNEAIWKLYPVTTTVTALGQAREMGAMALFGEKYGEEVRVVQVDTYSSELCGGTHVQNTGQIGLFKITGEGSIGSGLRRIEAITGSYALEYIKQLEDELKKAASALRSSPLELAKRIENLNNSLKEKDKEIENLLQRLSRSSSDELVNKAFQLNDAWILIEEVDIEDPGSLRQNAEMLKDKLGRAIVMLASIKGEKVSFVCFVSKDLLEQGLHAGKIVAAAAQVAGGGGGGRPDMAQAGGRDKSKISEALAEARKMVKKTLS.

Residues His567, His571, Cys669, and His673 each coordinate Zn(2+).

This sequence belongs to the class-II aminoacyl-tRNA synthetase family. It depends on Zn(2+) as a cofactor.

The protein localises to the cytoplasm. The enzyme catalyses tRNA(Ala) + L-alanine + ATP = L-alanyl-tRNA(Ala) + AMP + diphosphate. In terms of biological role, catalyzes the attachment of alanine to tRNA(Ala) in a two-step reaction: alanine is first activated by ATP to form Ala-AMP and then transferred to the acceptor end of tRNA(Ala). Also edits incorrectly charged Ser-tRNA(Ala) and Gly-tRNA(Ala) via its editing domain. The protein is Alanine--tRNA ligase of Syntrophomonas wolfei subsp. wolfei (strain DSM 2245B / Goettingen).